A 150-amino-acid polypeptide reads, in one-letter code: UPF0756 membrane protein YE1142 (150 aa).

A run of 4 helical transmembrane segments spans residues 1-21 (MAAL…GIIS), 51-71 (YGLT…IASG), 88-108 (ILAI…VSLM), and 114-134 (VVAG…GVPV).

It belongs to the UPF0756 family.

The protein localises to the cell membrane. This chain is UPF0756 membrane protein YE1142, found in Yersinia enterocolitica serotype O:8 / biotype 1B (strain NCTC 13174 / 8081).